A 420-amino-acid chain; its full sequence is MAALVRPARFVVRPLLQVVQAWDLDARRWVRALRRSPVKVVFPSGEVVEQKRAPGKQPRKAPSEASAQEQREKQPLEESASRAPSTWEESGLRYDKAYPGDRRLSSVMTIVKSRPFREKQGKILLEGRRLISDALKAGAVPKMFFFSRLEYLKELPVDKLKGVSLIKVKFEDIKDWSDLVTPQGIMGIFAKPDHVKMTYPKTQLQHSLPLLLICDNLRDPGNLGTILRSAAGAGCSKVLLTKGCVDAWEPKVLRAGMGAHFRMPIINNLEWETVPNYLPPDTRVYVADNCGLYAQAEMSNKASDHGWVCDQRVMKFHKYEEEEDVETGASQDWLPHVEVQSYDSDWTEAPAAVVIGGETYGVSLESLQLAESTGGKRLLIPVVPGVDSLNSAMAASILLFEGKRQLRGRAEDLSRDRSYH.

A mitochondrion-targeting transit peptide spans 1-40 (MAALVRPARFVVRPLLQVVQAWDLDARRWVRALRRSPVKV). The interval 49–88 (EQKRAPGKQPRKAPSEASAQEQREKQPLEESASRAPSTWE) is disordered. Over residues 69–80 (EQREKQPLEESA) the composition is skewed to basic and acidic residues. 3 residues coordinate S-adenosyl-L-methionine: G356, I380, and L389.

The protein belongs to the class IV-like SAM-binding methyltransferase superfamily. RNA methyltransferase TrmH family. Expressed at same level in normal liver and hepatocarcinoma.

It localises to the mitochondrion. It catalyses the reaction guanosine(1370) in 16S rRNA + S-adenosyl-L-methionine = 2'-O-methylguanosine(1370) in 16S rRNA + S-adenosyl-L-homocysteine + H(+). Functionally, S-adenosyl-L-methionine-dependent 2'-O-ribose methyltransferase that catalyzes the formation of 2'-O-methylguanosine at position 1370 (Gm1370) in the 16S mitochondrial large subunit ribosomal RNA (mtLSU rRNA), a conserved modification in the peptidyl transferase domain of the mtLSU rRNA. Also required for formation of 2'-O-methyluridine at position 1369 (Um1369) mediated by MRM2. This is rRNA methyltransferase 3, mitochondrial from Homo sapiens (Human).